A 422-amino-acid chain; its full sequence is Glucose-1-phosphate adenylyltransferase 2 (422 aa).

Alpha-D-glucose 1-phosphate contacts are provided by residues tyrosine 110, glycine 175, 190–191 (EK), and serine 208.

Belongs to the bacterial/plant glucose-1-phosphate adenylyltransferase family. In terms of assembly, homotetramer.

The catalysed reaction is alpha-D-glucose 1-phosphate + ATP + H(+) = ADP-alpha-D-glucose + diphosphate. The protein operates within glycan biosynthesis; glycogen biosynthesis. Its function is as follows. Involved in the biosynthesis of ADP-glucose, a building block required for the elongation reactions to produce glycogen. Catalyzes the reaction between ATP and alpha-D-glucose 1-phosphate (G1P) to produce pyrophosphate and ADP-Glc. The polypeptide is Glucose-1-phosphate adenylyltransferase 2 (Alkalilimnicola ehrlichii (strain ATCC BAA-1101 / DSM 17681 / MLHE-1)).